We begin with the raw amino-acid sequence, 80 residues long: Dermaseptin-A5 (80 aa).

The first 22 residues, 1–22 (MAFLKKSLFLVLFLGLVSLSIC), serve as a signal peptide directing secretion. Residues 23-43 (EEEKRENEDEEEQEDDEQSEM) constitute a propeptide that is removed on maturation. The disordered stretch occupies residues 24–45 (EEKRENEDEEEQEDDEQSEMKR). Over residues 30–40 (EDEEEQEDDEQ) the composition is skewed to acidic residues. Position 77 is a valine amide (V77). Residues 79–80 (EQ) constitute a propeptide that is removed on maturation.

This sequence belongs to the frog skin active peptide (FSAP) family. Dermaseptin subfamily. In terms of tissue distribution, expressed by the skin glands.

The protein localises to the secreted. Its function is as follows. Possesses a potent antimicrobial activity against Gram-positive and Gram-negative bacteria. Probably acts by disturbing membrane functions with its amphipathic structure. The chain is Dermaseptin-A5 from Agalychnis annae (Blue-sided leaf frog).